The primary structure comprises 463 residues: NADH dehydrogenase [ubiquinone] iron-sulfur protein 2, mitochondrial (463 aa).

The N-terminal 33 residues, 1–33 (MAALRALCGFRGVAAQVLRPGAGVRLPIQPSRG), are a transit peptide targeting the mitochondrion. N6-acetyllysine is present on lysine 62. The residue at position 118 (arginine 118) is a Symmetric dimethylarginine. Residues cysteine 326, cysteine 332, and cysteine 347 each coordinate [4Fe-4S] cluster.

It belongs to the complex I 49 kDa subunit family. Core subunit of respiratory chain NADH dehydrogenase (Complex I) which is composed of 45 different subunits. Component of the iron-sulfur (IP) fragment of the enzyme. Interacts with NDUFAF3. Interacts with NDUFAF7. Interacts with CERS2. [4Fe-4S] cluster is required as a cofactor. In terms of processing, dimethylation at Arg-118 by NDUFAF7 takes place after NDUFS2 assembles into the complex I, leading to stabilize the early intermediate complex.

The protein resides in the mitochondrion inner membrane. It catalyses the reaction a ubiquinone + NADH + 5 H(+)(in) = a ubiquinol + NAD(+) + 4 H(+)(out). In terms of biological role, core subunit of the mitochondrial membrane respiratory chain NADH dehydrogenase (Complex I) which catalyzes electron transfer from NADH through the respiratory chain, using ubiquinone as an electron acceptor. Essential for the catalytic activity of complex I. Essential for the assembly of complex I. Redox-sensitive, critical component of the oxygen-sensing pathway in the pulmonary vasculature which plays a key role in acute pulmonary oxygen-sensing and hypoxic pulmonary vasoconstriction. Plays an important role in carotid body sensing of hypoxia. Essential for glia-like neural stem and progenitor cell proliferation, differentiation and subsequent oligodendrocyte or neuronal maturation. This Homo sapiens (Human) protein is NADH dehydrogenase [ubiquinone] iron-sulfur protein 2, mitochondrial (NDUFS2).